Reading from the N-terminus, the 323-residue chain is 4-hydroxy-3-methylbut-2-enyl diphosphate reductase (323 aa).

[4Fe-4S] cluster is bound at residue C13. (2E)-4-hydroxy-3-methylbut-2-enyl diphosphate is bound by residues H42 and H75. Dimethylallyl diphosphate-binding residues include H42 and H75. Positions 42 and 75 each coordinate isopentenyl diphosphate. Residue C97 coordinates [4Fe-4S] cluster. H125 is a (2E)-4-hydroxy-3-methylbut-2-enyl diphosphate binding site. Position 125 (H125) interacts with dimethylallyl diphosphate. Residue H125 participates in isopentenyl diphosphate binding. The Proton donor role is filled by E127. T168 contributes to the (2E)-4-hydroxy-3-methylbut-2-enyl diphosphate binding site. A [4Fe-4S] cluster-binding site is contributed by C198. (2E)-4-hydroxy-3-methylbut-2-enyl diphosphate-binding residues include S226, S227, N228, and S270. Residues S226, S227, N228, and S270 each coordinate dimethylallyl diphosphate. The isopentenyl diphosphate site is built by S226, S227, N228, and S270.

The protein belongs to the IspH family. The cofactor is [4Fe-4S] cluster.

The enzyme catalyses isopentenyl diphosphate + 2 oxidized [2Fe-2S]-[ferredoxin] + H2O = (2E)-4-hydroxy-3-methylbut-2-enyl diphosphate + 2 reduced [2Fe-2S]-[ferredoxin] + 2 H(+). It catalyses the reaction dimethylallyl diphosphate + 2 oxidized [2Fe-2S]-[ferredoxin] + H2O = (2E)-4-hydroxy-3-methylbut-2-enyl diphosphate + 2 reduced [2Fe-2S]-[ferredoxin] + 2 H(+). It participates in isoprenoid biosynthesis; dimethylallyl diphosphate biosynthesis; dimethylallyl diphosphate from (2E)-4-hydroxy-3-methylbutenyl diphosphate: step 1/1. Its pathway is isoprenoid biosynthesis; isopentenyl diphosphate biosynthesis via DXP pathway; isopentenyl diphosphate from 1-deoxy-D-xylulose 5-phosphate: step 6/6. In terms of biological role, catalyzes the conversion of 1-hydroxy-2-methyl-2-(E)-butenyl 4-diphosphate (HMBPP) into a mixture of isopentenyl diphosphate (IPP) and dimethylallyl diphosphate (DMAPP). Acts in the terminal step of the DOXP/MEP pathway for isoprenoid precursor biosynthesis. The protein is 4-hydroxy-3-methylbut-2-enyl diphosphate reductase of Nitrosomonas europaea (strain ATCC 19718 / CIP 103999 / KCTC 2705 / NBRC 14298).